The chain runs to 185 residues: TATA-box-binding protein 3 (185 aa).

2 tandem repeats follow at residues 7–84 and 100–178.

Belongs to the TBP family.

Its function is as follows. General factor that plays a role in the activation of archaeal genes transcribed by RNA polymerase. Binds specifically to the TATA box promoter element which lies close to the position of transcription initiation. This chain is TATA-box-binding protein 3, found in Methanosarcina mazei (strain ATCC BAA-159 / DSM 3647 / Goe1 / Go1 / JCM 11833 / OCM 88) (Methanosarcina frisia).